Here is a 492-residue protein sequence, read N- to C-terminus: Catalase (492 aa).

Active-site residues include His-65 and Asn-138. Residue Tyr-348 participates in heme binding.

Belongs to the catalase family. As to quaternary structure, homotetramer. Heme serves as cofactor.

It is found in the cytoplasm. The protein localises to the cytosol. It localises to the peroxisome matrix. It carries out the reaction 2 H2O2 = O2 + 2 H2O. In terms of biological role, catalyzes the degradation of hydrogen peroxide (H(2)O(2)) generated by peroxisomal oxidases to water and oxygen, thereby protecting cells from the toxic effects of hydrogen peroxide. The polypeptide is Catalase (Vigna radiata var. radiata (Mung bean)).